The chain runs to 486 residues: Zinc finger chaperone ZPR1 (486 aa).

The segment at 1 to 31 (MSEQKEDLFKPVGEAAAEVEDESIAEQNKAN) is disordered. S23 is subject to Phosphoserine. 2 C4-type zinc fingers span residues 54–86 (CMNCGKNGTTRLLLTSIPYFREIIIMSFDCPHC) and 295–327 (CPSCTQECETHMKPVNIPHFKEVIIMSTVCDHC). T407 is modified (phosphothreonine).

This sequence belongs to the ZPR1 family. In terms of assembly, interacts with elongation factor 1-alpha.

Its subcellular location is the cytoplasm. The protein resides in the nucleus. Its function is as follows. Acts as a protein folding chaperone for elongation factor 1-alpha. The polypeptide is Zinc finger chaperone ZPR1 (Saccharomyces cerevisiae (strain ATCC 204508 / S288c) (Baker's yeast)).